We begin with the raw amino-acid sequence, 37 residues long: Cytochrome b6-f complex subunit 5 (37 aa).

The helical transmembrane segment at leucine 5 to alanine 25 threads the bilayer.

It belongs to the PetG family. As to quaternary structure, the 4 large subunits of the cytochrome b6-f complex are cytochrome b6, subunit IV (17 kDa polypeptide, PetD), cytochrome f and the Rieske protein, while the 4 small subunits are PetG, PetL, PetM and PetN. The complex functions as a dimer.

Its subcellular location is the plastid. It localises to the chloroplast thylakoid membrane. Its function is as follows. Component of the cytochrome b6-f complex, which mediates electron transfer between photosystem II (PSII) and photosystem I (PSI), cyclic electron flow around PSI, and state transitions. PetG is required for either the stability or assembly of the cytochrome b6-f complex. In Chlamydomonas moewusii (Chlamydomonas eugametos), this protein is Cytochrome b6-f complex subunit 5.